The chain runs to 411 residues: Secretion apparatus protein BsaZ (411 aa).

4 helical membrane passes run 28 to 48 (IVALIVIATGALAAPALVDLT), 80 to 100 (IAAPFVLLCAAAGALPSLVQS), 137 to 157 (ALLYVGVFALTVRVFAGLYHA), and 175 to 195 (IVLTVRLVLLFLLCALPVLIL). The disordered stretch occupies residues 341 to 411 (AANRGGPPPE…APARTGDQNA (71 aa)). Residues 370-404 (DACADNAFPDDAPPGAAAPNAGSPDGPAPDGGAPA) show a composition bias toward low complexity.

The protein belongs to the type III secretion exporter family.

Its subcellular location is the cell membrane. Its function is as follows. Part of the bsa type III secretion system, is involved in the intracellular replication of invading bacteria inside the host cell. Probably necessary for the lysis of the vacuole membrane and escape into the host cell cytoplasm. The polypeptide is Secretion apparatus protein BsaZ (bsaZ) (Burkholderia pseudomallei (strain 1026b)).